Consider the following 360-residue polypeptide: 3-dehydroquinate synthase (360 aa).

NAD(+) is bound by residues 72-77, 106-110, 130-131, Lys143, Lys152, and 170-173; these read DGEEFK, GVVGD, TT, and TLTT. Residues Glu185, His248, and His265 each coordinate Zn(2+).

The protein belongs to the sugar phosphate cyclases superfamily. Dehydroquinate synthase family. Co(2+) serves as cofactor. The cofactor is Zn(2+). Requires NAD(+) as cofactor.

The protein localises to the cytoplasm. The enzyme catalyses 7-phospho-2-dehydro-3-deoxy-D-arabino-heptonate = 3-dehydroquinate + phosphate. It participates in metabolic intermediate biosynthesis; chorismate biosynthesis; chorismate from D-erythrose 4-phosphate and phosphoenolpyruvate: step 2/7. Functionally, catalyzes the conversion of 3-deoxy-D-arabino-heptulosonate 7-phosphate (DAHP) to dehydroquinate (DHQ). This chain is 3-dehydroquinate synthase, found in Geobacter metallireducens (strain ATCC 53774 / DSM 7210 / GS-15).